Here is a 249-residue protein sequence, read N- to C-terminus: Geranylgeranylglyceryl phosphate synthase (249 aa).

Mg(2+) contacts are provided by Asp-20 and Ser-49. Sn-glycerol 1-phosphate-binding positions include 169-175 (YLDAGSG), 200-201 (GG), and 222-223 (GN).

It belongs to the GGGP/HepGP synthase family. Group II subfamily. As to quaternary structure, homohexamer. It depends on Mg(2+) as a cofactor.

The catalysed reaction is sn-glycerol 1-phosphate + (2E,6E,10E)-geranylgeranyl diphosphate = sn-3-O-(geranylgeranyl)glycerol 1-phosphate + diphosphate. Functionally, prenyltransferase that catalyzes the transfer of the geranylgeranyl moiety of geranylgeranyl diphosphate (GGPP) to the C3 hydroxyl of sn-glycerol-1-phosphate (G1P). This chain is Geranylgeranylglyceryl phosphate synthase, found in Spirosoma linguale (strain ATCC 33905 / DSM 74 / LMG 10896 / Claus 1).